Here is a 149-residue protein sequence, read N- to C-terminus: Deoxyuridine 5'-triphosphate nucleotidohydrolase (149 aa).

Residues 68–70, Asn-81, 85–87, and Met-95 contribute to the substrate site; these read RSG and LID.

The protein belongs to the dUTPase family. Mg(2+) is required as a cofactor.

The enzyme catalyses dUTP + H2O = dUMP + diphosphate + H(+). Its pathway is pyrimidine metabolism; dUMP biosynthesis; dUMP from dCTP (dUTP route): step 2/2. Its function is as follows. This enzyme is involved in nucleotide metabolism: it produces dUMP, the immediate precursor of thymidine nucleotides and it decreases the intracellular concentration of dUTP so that uracil cannot be incorporated into DNA. In Polynucleobacter necessarius subsp. necessarius (strain STIR1), this protein is Deoxyuridine 5'-triphosphate nucleotidohydrolase.